The chain runs to 525 residues: Sterol O-acyltransferase 2 (525 aa).

Disordered regions lie at residues 1–34 (MQPK…THGT) and 77–97 (QDRP…ELHP). Residues 1–119 (MQPKVPQLRR…IDELMEVQHF (119 aa)) are Cytoplasmic-facing. Residues 9-23 (RRREGLGEEQEKGAR) show a composition bias toward basic and acidic residues. H118 is a binding site for cholesterol. The chain crosses the membrane as a helical span at residues 120–141 (RTIYHMFIAGLCVLIISTLAID). The Lumenal segment spans residues 142–161 (FIDEGRLMLEFDLLLFSFGQ). Residues 162-187 (LPLALMTWVPMFLSTLLVPYQTLWLW) form a helical membrane-spanning segment. The Cytoplasmic segment spans residues 188–199 (ARPRAGGAWMLG). The chain crosses the membrane as a helical span at residues 200–223 (ASLGCVLLAAHAVVLCVLPVHVSV). Residues 224 to 231 (RHELPPAS) are Lumenal-facing. The helical transmembrane segment at 232 to 255 (RCVLVFEQVRLLMKSYSFLRETVP) threads the bilayer. Topologically, residues 256–296 (GIFCVRGGKGISPPSFSSYLYFLFCPTLIYRETYPRTPSIR) are cytoplasmic. A Cysteine sulfenic acid (-SOH); alternate modification is found at C280. Residue C280 forms a Glycyl cysteine thioester (Cys-Gly) (interchain with G-Cter in ubiquitin); alternate linkage. The chain crosses the membrane as a helical span at residues 297–329 (WNYVAKNFAQVLGCLLYACFILGRLCVPVFANM). Residues 330–346 (SREPFSTRALLLSILHA) are Lumenal-facing. Residues 347–372 (TGPGIFMLLLIFFAFLHCWLNAFAEM) traverse the membrane as a helical segment. Topologically, residues 373–420 (LRFGDRMFYRDWWNSTSFSNYYRTWNVVVHDWLYSYVYQDGLWLLGRR) are cytoplasmic. An FYXDWWN motif motif is present at residues 380-386 (FYRDWWN). An acyl-CoA is bound by residues N392, R395, N398, H402, Y410, and S433. The chain crosses the membrane as a helical span at residues 421 to 445 (ARGVAMLGVFLVSAVVHEYIFCFVL). The active site involves H437. Over 446-451 (GFFYPV) the chain is Lumenal. The chain crosses the membrane as a helical span at residues 452-467 (MLMLFLVFGGLLNFTM). Topologically, residues 468 to 473 (NDRHTG) are cytoplasmic. The helical transmembrane segment at 474 to 505 (PAWNILMWTFLFMGQGIQVSLYCQEWYARRHC) threads the bilayer. The Lumenal segment spans residues 506–525 (PLPQTTFWGMVTPRSWSCHP).

This sequence belongs to the membrane-bound acyltransferase family. Sterol o-acyltransferase subfamily. As to quaternary structure, may form homo- or heterodimers. Interacts with INSIG1; the interaction is direct and promotes association with AMFR/gp78. In terms of processing, polyubiquitinated by AMFR/gp78 at Cys-280, leading to its degradation when the lipid levels are low. Association with AMFR/gp78 is mediated via interaction with INSIG1. High concentration of cholesterol and fatty acid results in Cys-280 oxidation, preventing ubiquitination at the same site, resulting in protein stabilization. Post-translationally, oxidized at Cys-280: high concentration of cholesterol and fatty acid induce reactive oxygen species, which oxidizes Cys-280, preventing ubiquitination at the same site, and resulting in protein stabilization.

It localises to the endoplasmic reticulum membrane. The enzyme catalyses a sterol + a long-chain fatty acyl-CoA = a long-chain 3-hydroxysterol ester + CoA. The catalysed reaction is cholesterol + an acyl-CoA = a cholesterol ester + CoA. It catalyses the reaction cholesterol + (9Z)-octadecenoyl-CoA = cholesteryl (9Z-octadecenoate) + CoA. It carries out the reaction (5Z,8Z,11Z,14Z,17Z)-eicosapentaenoyl-CoA + cholesterol = (5Z,8Z,11Z,14Z,17Z-eicosapentaenoyl)-cholesterol + CoA. The enzyme catalyses (9Z,12Z,15Z)-octadecatrienoyl-CoA + cholesterol = (9Z,12Z,15Z-octadecatrienoyl)-cholesterol + CoA. The catalysed reaction is (5Z,8Z,11Z,14Z)-eicosatetraenoyl-CoA + cholesterol = cholesteryl (5Z,8Z,11Z,14Z)-eicosatetraenoate + CoA. Its function is as follows. Catalyzes the formation of fatty acid-cholesterol esters, which are less soluble in membranes than cholesterol. Plays a role in lipoprotein assembly and dietary cholesterol absorption. Utilizes oleoyl-CoA ((9Z)-octadecenoyl-CoA) and linolenoyl-CoA ((9Z,12Z,15Z)-octadecatrienoyl-CoA) as substrates. May provide cholesteryl esters for lipoprotein secretion from hepatocytes and intestinal mucosa. The polypeptide is Sterol O-acyltransferase 2 (Mus musculus (Mouse)).